The following is a 110-amino-acid chain: MELLRIAVLFAFTAVAEIVGCYLPWLVLRQGKPFWLLLPAAASLALFAWLLTLHPAAAGRTYAAYGGVYIAVALVWLRLVDGVALTRWDVGGAAIALTGMAVIALQPQAN.

The next 4 membrane-spanning stretches (helical) occupy residues 8 to 28 (VLFA…WLVL), 33 to 53 (PFWL…LLTL), 65 to 85 (YGGV…GVAL), and 88 to 108 (WDVG…LQPQ).

This sequence belongs to the UPF0060 family.

The protein localises to the cell inner membrane. The protein is UPF0060 membrane protein Rpic_4131 of Ralstonia pickettii (strain 12J).